An 865-amino-acid chain; its full sequence is MPHVDLNPLKQRMQAARAAAVAQFRQHPRPDMLLTELRRIVDQALRELVKLCPLPAGATLAAVGSYGRGELYPHSDVDLLILLPQPPSAADARAVEALVAALWDLGLEPGHSVRTLEDCEREARGDITVETALLESRWLAGSRTLMKRLDSAMQARLDAAVFFQAKRVEMQQRHAHYQDTPYALEPNCKESPGGLRDLQVILWMARAAGFGHSWREVAQAGLLTSSEARDLRRAEQAFKRLRIELHLLTGRREDRVLFDLQPGLAAVYGIASTATRRASELLMQRYYWAARLVTQLNVILVQNIEERLFPRPDSDARLIDDDFRNLRERLDIVREDGFERNPTLLLRAFLVMQQHPELIGMSARTLRAIWHSRHRIDAQFRRNPVNRKLFLQILQQPRGIVHELRRMTMLNILPRYLPVFRRIVGQMQHDLFHVYTVDQHTLAVVRNLRRFTMPEHAQEYPLASQLIAGLDRHWLLYVAALFHDIAKGRGGDHSELGAREVRRFAQDHGLDPTDAELVEFLVRHHLLMSAVAQKRDLSDPQVVRDFAAQVGDERRLAALYLLTVADIRGTSPRVWNAWKGKLLEDLFRLTLAALGGAHADAHTVLTERKDEAARLTRLAGLRDDAREAFWNQLDIAYFLRHDASEIAWHTRHLYYQVAPDEPVVRVRPTEHGEGLQVMVYTRDAPDLFVTTCGYFDAKSLSVQDARVHTTRHGWALDSFIVLAPEGFADLRAQATLVEHELAERLRDPHAARHAHAPRRLPHSHARRSRVFPVMPQAELSPDERSQSWRLSVTATDRPGLLYALARVFAEHGVDLIMAKIMTLGERVEDVFIVSGSALERPRSQMQFERAILDALAGDEPRQQAA.

The uridylyltransferase stretch occupies residues 1–318; the sequence is MPHVDLNPLK…FPRPDSDARL (318 aa). Positions 319–675 are uridylyl-removing; that stretch reads IDDDFRNLRE…VRPTEHGEGL (357 aa). An HD domain is found at 437–559; it reads VDQHTLAVVR…VGDERRLAAL (123 aa). ACT domains follow at residues 676–762 and 789–865; these read QVMV…RLPH and RLSV…QQAA. The interval 747–767 is disordered; that stretch reads DPHAARHAHAPRRLPHSHARR. Residues 751–767 show a composition bias toward basic residues; that stretch reads ARHAHAPRRLPHSHARR.

This sequence belongs to the GlnD family. Mg(2+) serves as cofactor.

The enzyme catalyses [protein-PII]-L-tyrosine + UTP = [protein-PII]-uridylyl-L-tyrosine + diphosphate. It carries out the reaction [protein-PII]-uridylyl-L-tyrosine + H2O = [protein-PII]-L-tyrosine + UMP + H(+). Its activity is regulated as follows. Uridylyltransferase (UTase) activity is inhibited by glutamine, while glutamine activates uridylyl-removing (UR) activity. Its function is as follows. Modifies, by uridylylation and deuridylylation, the PII regulatory proteins (GlnB and homologs), in response to the nitrogen status of the cell that GlnD senses through the glutamine level. Under low glutamine levels, catalyzes the conversion of the PII proteins and UTP to PII-UMP and PPi, while under higher glutamine levels, GlnD hydrolyzes PII-UMP to PII and UMP (deuridylylation). Thus, controls uridylylation state and activity of the PII proteins, and plays an important role in the regulation of nitrogen assimilation and metabolism. The chain is Bifunctional uridylyltransferase/uridylyl-removing enzyme from Bordetella pertussis (strain Tohama I / ATCC BAA-589 / NCTC 13251).